We begin with the raw amino-acid sequence, 489 residues long: MKLVELIKNLTIELQDGPLDREISGIAYDSRRVKPGDLFICISGLKSDGHLFAGQAIENGAVAVLAERQLDTGGKATLLTTPDTRSALALLAANYYGRPSKSIRVVAVTGTNGKTTTTDLIKAILEEAGKKTAIMGTLYAQVGEIQREMQHTTPEALEIESFMALCREEKADYIVMEVSSHALQLQRVAEIDFNVAVFTNLTQDHLDFHQNMDNYRAAKLQLFQMIKEEKQNYAIINIDDPWAEEIFQAATIPCRSYGIKKRSDYQAGELKIDLDGSSFRLHYGDNSLMINMKLIGLFSIYNALAAISFALQEGIDPGLIQSALARVEGVPGRFEKVDCGQDFAVIVDYAHTPDGLENILQTSRELGKKRLICVFGCGGDRDRSKRPLMGEIAAKYSDFCVVTSDNPRSEDPHAIIAEIIPGMDKVEKSRYAIIVDRREAIRHAIHLARTGDLVVIAGKGHENYQLVKDQVLEFDDRKVAAELLRGKVK.

Serine 30 serves as a coordination point for UDP-N-acetyl-alpha-D-muramoyl-L-alanyl-D-glutamate. 110–116 provides a ligand contact to ATP; sequence GTNGKTT. UDP-N-acetyl-alpha-D-muramoyl-L-alanyl-D-glutamate contacts are provided by residues 152–153, serine 179, and arginine 187; that span reads TT. An N6-carboxylysine modification is found at lysine 219. Meso-2,6-diaminopimelate contacts are provided by residues arginine 381, 405 to 408, glycine 458, and glutamate 462; that span reads DNPR. The short motif at 405 to 408 is the Meso-diaminopimelate recognition motif element; that stretch reads DNPR.

It belongs to the MurCDEF family. MurE subfamily. It depends on Mg(2+) as a cofactor. In terms of processing, carboxylation is probably crucial for Mg(2+) binding and, consequently, for the gamma-phosphate positioning of ATP.

It is found in the cytoplasm. It catalyses the reaction UDP-N-acetyl-alpha-D-muramoyl-L-alanyl-D-glutamate + meso-2,6-diaminopimelate + ATP = UDP-N-acetyl-alpha-D-muramoyl-L-alanyl-gamma-D-glutamyl-meso-2,6-diaminopimelate + ADP + phosphate + H(+). The protein operates within cell wall biogenesis; peptidoglycan biosynthesis. Its function is as follows. Catalyzes the addition of meso-diaminopimelic acid to the nucleotide precursor UDP-N-acetylmuramoyl-L-alanyl-D-glutamate (UMAG) in the biosynthesis of bacterial cell-wall peptidoglycan. The chain is UDP-N-acetylmuramoyl-L-alanyl-D-glutamate--2,6-diaminopimelate ligase from Syntrophomonas wolfei subsp. wolfei (strain DSM 2245B / Goettingen).